The following is a 338-amino-acid chain: Phenylalanine--tRNA ligase alpha subunit (338 aa).

Residue Glu-252 participates in Mg(2+) binding.

This sequence belongs to the class-II aminoacyl-tRNA synthetase family. Phe-tRNA synthetase alpha subunit type 1 subfamily. As to quaternary structure, tetramer of two alpha and two beta subunits. Mg(2+) serves as cofactor.

The protein localises to the cytoplasm. The catalysed reaction is tRNA(Phe) + L-phenylalanine + ATP = L-phenylalanyl-tRNA(Phe) + AMP + diphosphate + H(+). This chain is Phenylalanine--tRNA ligase alpha subunit, found in Pseudomonas fluorescens (strain SBW25).